A 503-amino-acid chain; its full sequence is Cytochrome P450 11B1, mitochondrial (503 aa).

A mitochondrion-targeting transit peptide spans 1–24 (MALRAKAEVCMAVPWLSLQRAQAL). Position 450 (C450) interacts with heme.

Belongs to the cytochrome P450 family. The cofactor is heme. Expressed in the zona fasciculata/reticularis of the adrenal cortex.

The protein resides in the mitochondrion inner membrane. It carries out the reaction a steroid + 2 reduced [adrenodoxin] + O2 + 2 H(+) = an 11beta-hydroxysteroid + 2 oxidized [adrenodoxin] + H2O. It catalyses the reaction 11-deoxycortisol + 2 reduced [adrenodoxin] + O2 + 2 H(+) = cortisol + 2 oxidized [adrenodoxin] + H2O. The catalysed reaction is 21-hydroxyprogesterone + 2 reduced [adrenodoxin] + O2 + 2 H(+) = corticosterone + 2 oxidized [adrenodoxin] + H2O. It functions in the pathway steroid biosynthesis; glucocorticoid biosynthesis. It participates in steroid hormone biosynthesis. A cytochrome P450 monooxygenase involved in the biosynthesis of adrenal corticoids. Catalyzes a variety of reactions that are essential for many species, including detoxification, defense, and the formation of endogenous chemicals like steroid hormones. Steroid 11beta, 18- and 19-hydroxylase with preferred regioselectivity at 11beta, then 18, and lastly 19. Catalyzes the hydroxylation of 11-deoxycortisol and 11-deoxycorticosterone (21-hydroxyprogesterone) at 11beta position, yielding cortisol or corticosterone, respectively, but cannot produce aldosterone. Mechanistically, uses molecular oxygen inserting one oxygen atom into a substrate for hydroxylation and reducing the second into a water molecule. Two electrons are provided by NADPH via a two-protein mitochondrial transfer system comprising flavoprotein FDXR (adrenodoxin/ferredoxin reductase) and nonheme iron-sulfur protein FDX1 or FDX2 (adrenodoxin/ferredoxin). Due to its lack of 18-oxidation activity, it is incapable of generating aldosterone. Could also be involved in the androgen metabolic pathway. This chain is Cytochrome P450 11B1, mitochondrial, found in Homo sapiens (Human).